A 445-amino-acid polypeptide reads, in one-letter code: Glucose-6-phosphate isomerase 2 (445 aa).

Residue E285 is the Proton donor of the active site. Residues H306 and K420 contribute to the active site.

Belongs to the GPI family. In terms of assembly, homodimer.

It is found in the cytoplasm. It catalyses the reaction alpha-D-glucose 6-phosphate = beta-D-fructose 6-phosphate. It participates in carbohydrate biosynthesis; gluconeogenesis. Its pathway is carbohydrate degradation; glycolysis; D-glyceraldehyde 3-phosphate and glycerone phosphate from D-glucose: step 2/4. Functionally, catalyzes the reversible isomerization of glucose-6-phosphate to fructose-6-phosphate. This chain is Glucose-6-phosphate isomerase 2, found in Geobacillus stearothermophilus (Bacillus stearothermophilus).